A 1930-amino-acid polypeptide reads, in one-letter code: Transport and Golgi organization protein 1 homolog (1930 aa).

A signal peptide spans 1 to 24; sequence MAAAPGLLFWLFVLGALWWVPGQS. Residues 25–1171 lie on the Lumenal side of the membrane; sequence DLSHGRRFSD…EPAAVPPLES (1147 aa). In terms of domain architecture, SH3 spans 45–107; the sequence is MLMYRGKALE…PKDLIKVLHK (63 aa). Disordered stretches follow at residues 144 to 263, 317 to 496, 547 to 737, 754 to 891, and 1018 to 1149; these read LELE…REKT, EEEE…AAEK, LGSS…MNSQ, TKQP…TPEI, and TAPL…PVGA. Residues 152–189 are compositionally biased toward basic and acidic residues; sequence EESKKAEEVSQHREKSPEESRGRELDPVPEPEAFRADS. Over residues 197-211 the composition is skewed to polar residues; it reads SESTEGLQGQPSAQE. Serine 229 carries the phosphoserine modification. Residues 247-256 are compositionally biased toward polar residues; the sequence is ESRTGNSSPA. The segment covering 317 to 330 has biased composition (acidic residues); the sequence is EEEEEVEEDADSSD. Positions 338–368 are enriched in basic and acidic residues; it reads SDKDEKVPGKPMIEKYLTDKDPNLSEEDKVE. The N-linked (GlcNAc...) asparagine glycan is linked to asparagine 360. Acidic residues predominate over residues 420-430; the sequence is DSEDEGDDLFV. Composition is skewed to basic and acidic residues over residues 431 to 442 and 451 to 461; these read EEPKTNDVKDSE and GEEKDIQESRK. Asparagine 631 carries an N-linked (GlcNAc...) asparagine glycan. The segment covering 661–677 has biased composition (basic and acidic residues); the sequence is EDGTDAEQARAIRRPQE. Positions 692 to 701 are enriched in acidic residues; it reads DEEEEEEEGD. Residues 715 to 726 are compositionally biased toward polar residues; that stretch reads VSAQQSRENSPS. Positions 791–800 are enriched in basic and acidic residues; that stretch reads EESHLADMRA. At serine 856 the chain carries Phosphoserine. The span at 1030 to 1039 shows a compositional bias: basic and acidic residues; sequence GWARPGEERQ. Polar residues-rich tracts occupy residues 1040-1054 and 1115-1127; these read PPQQ…TGDL and QPVT…SEVS. Over residues 1128–1137 the composition is skewed to basic and acidic residues; the sequence is QKPDTKKDID. Residues 1172–1192 lie within the membrane without spanning it; the sequence is AFGSLYAFILYLSKMLLATLP. At 1193-1202 the chain is on the lumenal side; that stretch reads DNVQPGPDFY. A helical transmembrane segment spans residues 1203-1223; sequence GLPWQPVIITAVLGIVSFAIF. The Cytoplasmic segment spans residues 1224–1930; the sequence is SWRTILVVKS…DRSQASKPTP (707 aa). Coiled-coil stretches lie at residues 1236 to 1329 and 1359 to 1422; these read YQVT…KNQD and LNEA…EIAL. Residues 1238 to 1677 form a mediates interaction with MIA2 region; that stretch reads VTEKQISEKL…VIVKPMPGRP (440 aa). A disordered region spans residues 1447–1472; it reads ESEDPDKGGNESDDLANGETGGDRSE. Position 1458 is a phosphoserine (serine 1458). The stretch at 1514-1662 forms a coiled coil; the sequence is NLEDQIKKLE…LLEMTQKMAM (149 aa). Disordered regions lie at residues 1669-1796, 1801-1820, and 1840-1930; these read IVKP…VPLM, PPPI…FGPR, and APGV…KPTP. Positions 1677–1694 are enriched in polar residues; the sequence is PNTQNPPRRGLLSQNGSF. Serine 1693 and serine 1705 each carry phosphoserine. Pro residues predominate over residues 1706 to 1715; that stretch reads PPLPAEPPGR. Residues 1722 to 1738 show a composition bias toward basic and acidic residues; that stretch reads SRRDTPRSEFGSLDRHL. Residues serine 1733, serine 1754, serine 1766, and serine 1770 each carry the phosphoserine modification. Residues 1760–1773 are compositionally biased toward low complexity; sequence PVVNSSSRSSSPAK. A proline-rich domain (PRD); mediates interaction with the COPII coat subunits SEC23A and SEC23B region spans residues 1776–1930; it reads DEGKVNMAPK…DRSQASKPTP (155 aa). The span at 1801-1811 shows a compositional bias: pro residues; it reads PPPIRYGPPPQ. An Asymmetric dimethylarginine modification is found at arginine 1805. The tract at residues 1809–1869 is SEC16A-interacting region (SIR); required for its localization to endoplasmic reticulum exit sites and for its interaction with SEC16A; the sequence is PPQLCGGPFG…GHTPFRPPGS (61 aa). The span at 1846-1858 shows a compositional bias: basic and acidic residues; that stretch reads GKRDLPLDPREFL. Pro residues predominate over residues 1881–1898; it reads RLPPPTHGPQEYPPPPPA. A Phosphoserine modification is found at serine 1915. A compositionally biased stretch (polar residues) spans 1915 to 1930; that stretch reads SPSSVQDRSQASKPTP.

This sequence belongs to the MIA/OTOR family. Tango1 subfamily. In terms of assembly, interacts with MIA2. Interacts (via SH3 domain) with COL7A1. Interacts with the COPII coat subunits SEC23A, SEC23B and maybe SEC24C. May interact with APOB and MIA2. Interacts with SEC16A.

Its subcellular location is the endoplasmic reticulum membrane. In terms of biological role, plays a role in the transport of cargos that are too large to fit into COPII-coated vesicles and require specific mechanisms to be incorporated into membrane-bound carriers and exported from the endoplasmic reticulum. This protein is required for collagen VII (COL7A1) secretion by loading COL7A1 into transport carriers. It may participate in cargo loading of COL7A1 at endoplasmic reticulum exit sites by binding to COPII coat subunits Sec23/24 and guiding SH3-bound COL7A1 into a growing carrier. Does not play a role in global protein secretion and is apparently specific to COL7A1 cargo loading. However, it may participate in secretion of other proteins in cells that do not secrete COL7A1. It is also specifically required for the secretion of lipoproteins by participating in their export from the endoplasmic reticulum. Required for correct assembly of COPII coat components at endoplasmic reticulum exit sites (ERES) and for the localization of SEC16A and membrane-bound ER-resident complexes consisting of MIA2 and PREB/SEC12 to ERES. This is Transport and Golgi organization protein 1 homolog from Mus musculus (Mouse).